Reading from the N-terminus, the 113-residue chain is Large ribosomal subunit protein bL17 (113 aa).

It belongs to the bacterial ribosomal protein bL17 family. Part of the 50S ribosomal subunit. Contacts protein L32.

This chain is Large ribosomal subunit protein bL17, found in Alkaliphilus metalliredigens (strain QYMF).